The following is an 831-amino-acid chain: SID1 transmembrane family member 1 (831 aa).

A signal peptide spans 1 to 19; that stretch reads MLDCPRLALLCALPWLLRA. Topologically, residues 20–308 are extracellular; that stretch reads AVPGHRAEPL…SVKGSVYVKS (289 aa). N67, N83, N136, and N281 each carry an N-linked (GlcNAc...) asparagine glycan. The helical transmembrane segment at 309 to 329 threads the bilayer; that stretch reads SLFSVFVFLSFYLGCLLVVFV. At 330–441 the chain is on the cytoplasmic side; the sequence is HHMRFQRKPV…DRRIVSKKYK (112 aa). Residues 354-408 form a disordered region; it reads VSHPITASTPEGSNYGAIDESSSSPGRQMSSSDGGQPCHSDTDSSVEESDFDTMP. Residues 374–385 are compositionally biased toward low complexity; the sequence is SSSSPGRQMSSS. Residues 397–408 show a composition bias toward acidic residues; it reads SSVEESDFDTMP. Residues 442 to 462 traverse the membrane as a helical segment; that stretch reads IYFWNIITIAVFYALPVMQLV. Topologically, residues 463–493 are extracellular; that stretch reads ITYQTVVNVTGNQDICYYNFLCAHPLGVLSA. N-linked (GlcNAc...) asparagine glycosylation occurs at N470. A helical transmembrane segment spans residues 494-514; the sequence is FNNILSNLGHVLLGFLFLLIV. Over 515-540 the chain is Cytoplasmic; that stretch reads LRRDLLHRRALEAKDIFAMEYGIPKH. The chain crosses the membrane as a helical span at residues 541 to 561; the sequence is FGLFYAMGIALMMEGVLSACY. Residues 562-571 lie on the Extracellular side of the membrane; that stretch reads HVCPNYSNFQ. Residue N566 is glycosylated (N-linked (GlcNAc...) asparagine). Residues 572-589 traverse the membrane as a helical segment; that stretch reads FDTSFMYMIAGLCMLKLY. Topologically, residues 590–599 are cytoplasmic; that stretch reads QTRHPDINAS. Residues 600-620 traverse the membrane as a helical segment; the sequence is AYSAYASFAVVITLTVLGVVF. Over 621–625 the chain is Extracellular; sequence GKNDV. A helical transmembrane segment spans residues 626-646; that stretch reads WFWIIFSAIHVLASLALSTQI. At 647–687 the chain is on the cytoplasmic side; the sequence is YYMGRFKIDVSDTDLGIFRRAAMVFYTDCIQQCSRPLYMDR. A helical transmembrane segment spans residues 688-708; that stretch reads MVLLIVGNLVNWSFALFGLIY. Residues 709–714 are Extracellular-facing; sequence RPRDFA. The helical transmembrane segment at 715–735 threads the bilayer; it reads SYMLGIFICNLLLYLAFYIIM. The Cytoplasmic portion of the chain corresponds to 736–745; the sequence is KLRSSEKVLP. The helical transmembrane segment at 746–766 threads the bilayer; it reads LPVFCIVATAVVWAAALYFFF. Residues 767 to 795 lie on the Extracellular side of the membrane; the sequence is QNLSSWEGTPAESREKNRECVLLGFFDDH. N768 carries an N-linked (GlcNAc...) asparagine glycan. A helical membrane pass occupies residues 796 to 816; that stretch reads DIWHFLSATALFFSFLVLLTL. Over 817–831 the chain is Cytoplasmic; the sequence is DDDLDVVRRDQIPVF.

This sequence belongs to the SID1 family.

It is found in the membrane. In vitro binds long double-stranded RNA (dsRNA) (500 and 700 base pairs), but not dsRNA shorter than 300 bp. Not involved in RNA autophagy, a process in which RNA is directly imported into lysosomes in an ATP-dependent manner, and degraded. The protein is SID1 transmembrane family member 1 (Sidt1) of Rattus norvegicus (Rat).